Reading from the N-terminus, the 173-residue chain is NADH-quinone oxidoreductase subunit I 1 (173 aa).

2 4Fe-4S ferredoxin-type domains span residues 41–73 and 83–112; these read IVLT…LAKA and EHFR…LTPD. Residues C53, C56, C59, C63, C92, C95, C98, and C102 each coordinate [4Fe-4S] cluster.

Belongs to the complex I 23 kDa subunit family. NDH-1 is composed of 14 different subunits. Subunits NuoA, H, J, K, L, M, N constitute the membrane sector of the complex. It depends on [4Fe-4S] cluster as a cofactor.

The protein localises to the cell inner membrane. The enzyme catalyses a quinone + NADH + 5 H(+)(in) = a quinol + NAD(+) + 4 H(+)(out). Functionally, NDH-1 shuttles electrons from NADH, via FMN and iron-sulfur (Fe-S) centers, to quinones in the respiratory chain. The immediate electron acceptor for the enzyme in this species is believed to be ubiquinone. Couples the redox reaction to proton translocation (for every two electrons transferred, four hydrogen ions are translocated across the cytoplasmic membrane), and thus conserves the redox energy in a proton gradient. The protein is NADH-quinone oxidoreductase subunit I 1 of Rhodopseudomonas palustris (strain BisA53).